The primary structure comprises 425 residues: Serine--tRNA ligase (425 aa).

230 to 232 is a binding site for L-serine; the sequence is TSE. Position 261 to 263 (261 to 263) interacts with ATP; that stretch reads RKE. Glu284 contributes to the L-serine binding site. 348-351 contacts ATP; it reads EISS. Ser385 contacts L-serine.

Belongs to the class-II aminoacyl-tRNA synthetase family. Type-1 seryl-tRNA synthetase subfamily. As to quaternary structure, homodimer. The tRNA molecule binds across the dimer.

It is found in the cytoplasm. The catalysed reaction is tRNA(Ser) + L-serine + ATP = L-seryl-tRNA(Ser) + AMP + diphosphate + H(+). The enzyme catalyses tRNA(Sec) + L-serine + ATP = L-seryl-tRNA(Sec) + AMP + diphosphate + H(+). Its pathway is aminoacyl-tRNA biosynthesis; selenocysteinyl-tRNA(Sec) biosynthesis; L-seryl-tRNA(Sec) from L-serine and tRNA(Sec): step 1/1. Catalyzes the attachment of serine to tRNA(Ser). Is also able to aminoacylate tRNA(Sec) with serine, to form the misacylated tRNA L-seryl-tRNA(Sec), which will be further converted into selenocysteinyl-tRNA(Sec). In Wolbachia pipientis wMel, this protein is Serine--tRNA ligase.